The primary structure comprises 699 residues: Elongation factor G (699 aa).

The tr-type G domain occupies 8–288 (EDYRNFGIMA…AVVDYLPSPL (281 aa)). GTP is bound by residues 17–24 (AHIDAGKT), 86–90 (DTPGH), and 140–143 (NKMD).

The protein belongs to the TRAFAC class translation factor GTPase superfamily. Classic translation factor GTPase family. EF-G/EF-2 subfamily.

The protein localises to the cytoplasm. Functionally, catalyzes the GTP-dependent ribosomal translocation step during translation elongation. During this step, the ribosome changes from the pre-translocational (PRE) to the post-translocational (POST) state as the newly formed A-site-bound peptidyl-tRNA and P-site-bound deacylated tRNA move to the P and E sites, respectively. Catalyzes the coordinated movement of the two tRNA molecules, the mRNA and conformational changes in the ribosome. The polypeptide is Elongation factor G (Rhizobium rhizogenes (strain K84 / ATCC BAA-868) (Agrobacterium radiobacter)).